Here is a 675-residue protein sequence, read N- to C-terminus: Methionine--tRNA ligase (675 aa).

The 'HIGH' region motif lies at Pro15–His25. Zn(2+)-binding residues include Cys146, Cys149, Cys159, and Cys162. The short motif at Lys332–Ser336 is the 'KMSKS' region element. Lys335 is an ATP binding site. The tRNA-binding domain maps to Asp573–Lys675.

This sequence belongs to the class-I aminoacyl-tRNA synthetase family. MetG type 1 subfamily. In terms of assembly, homodimer. It depends on Zn(2+) as a cofactor.

Its subcellular location is the cytoplasm. It carries out the reaction tRNA(Met) + L-methionine + ATP = L-methionyl-tRNA(Met) + AMP + diphosphate. Functionally, is required not only for elongation of protein synthesis but also for the initiation of all mRNA translation through initiator tRNA(fMet) aminoacylation. The polypeptide is Methionine--tRNA ligase (Yersinia pseudotuberculosis serotype O:3 (strain YPIII)).